The primary structure comprises 259 residues: MKDLPLSIGGKTLTSRFFLGTGRYPNPFVQNEVIRVSEAEVLTFAIRRVNLQAPGEDAILQHLEGKTFTYLPNTSGAKNAEEAIRIARLARASGLSDWIKVEISVNERTLLPDPVETLRATETLANEGFTVLPYTSDDPVLCKRLEEAGAAAVMPGGAPIGTGLGILNPYNLGLIVEEANVPIIVDAGLGSAQDVVQAMELGADGVLMNTPVAKAKDPVKMALAMKHAIEAGRLSYLAGRIPKKRYATASSGLETFISK.

The active-site Schiff-base intermediate with DXP is the Lys-100. 1-deoxy-D-xylulose 5-phosphate-binding positions include Gly-161, Ala-187 to Gly-188, and Asn-209 to Thr-210.

Belongs to the ThiG family. In terms of assembly, homotetramer. Forms heterodimers with either ThiH or ThiS.

Its subcellular location is the cytoplasm. It carries out the reaction [ThiS sulfur-carrier protein]-C-terminal-Gly-aminoethanethioate + 2-iminoacetate + 1-deoxy-D-xylulose 5-phosphate = [ThiS sulfur-carrier protein]-C-terminal Gly-Gly + 2-[(2R,5Z)-2-carboxy-4-methylthiazol-5(2H)-ylidene]ethyl phosphate + 2 H2O + H(+). The protein operates within cofactor biosynthesis; thiamine diphosphate biosynthesis. Functionally, catalyzes the rearrangement of 1-deoxy-D-xylulose 5-phosphate (DXP) to produce the thiazole phosphate moiety of thiamine. Sulfur is provided by the thiocarboxylate moiety of the carrier protein ThiS. In vitro, sulfur can be provided by H(2)S. This Halalkalibacterium halodurans (strain ATCC BAA-125 / DSM 18197 / FERM 7344 / JCM 9153 / C-125) (Bacillus halodurans) protein is Thiazole synthase.